The primary structure comprises 207 residues: 2,3-bisphosphoglycerate-dependent phosphoglycerate mutase (207 aa).

Substrate is bound by residues 10 to 17, 23 to 24, Arg-62, 89 to 92, Lys-100, 116 to 117, and 160 to 161; these read RHGQSEWN, TG, ERDY, RR, and GN. His-11 serves as the catalytic Tele-phosphohistidine intermediate. Glu-89 (proton donor/acceptor) is an active-site residue.

This sequence belongs to the phosphoglycerate mutase family. BPG-dependent PGAM subfamily. Homodimer.

It carries out the reaction (2R)-2-phosphoglycerate = (2R)-3-phosphoglycerate. Its pathway is carbohydrate degradation; glycolysis; pyruvate from D-glyceraldehyde 3-phosphate: step 3/5. In terms of biological role, catalyzes the interconversion of 2-phosphoglycerate and 3-phosphoglycerate. This Bradyrhizobium sp. (strain ORS 278) protein is 2,3-bisphosphoglycerate-dependent phosphoglycerate mutase.